A 150-amino-acid polypeptide reads, in one-letter code: Ribonuclease HI (150 aa).

Residues 1–142 (MSDSVELFTD…ADQLANRGVD (142 aa)) enclose the RNase H type-1 domain. Mg(2+) contacts are provided by aspartate 10, glutamate 48, aspartate 70, and aspartate 134.

This sequence belongs to the RNase H family. Monomer. Mg(2+) is required as a cofactor.

It localises to the cytoplasm. The catalysed reaction is Endonucleolytic cleavage to 5'-phosphomonoester.. In terms of biological role, endonuclease that specifically degrades the RNA of RNA-DNA hybrids. This Pseudomonas syringae pv. tomato (strain ATCC BAA-871 / DC3000) protein is Ribonuclease HI.